The primary structure comprises 859 residues: Cadherin-related family member 1 (859 aa).

The N-terminal stretch at 1–19 is a signal peptide; it reads MRRCRWAALALGLLRLCLA. At 20-700 the chain is on the extracellular side; it reads QANFAPHFFD…LIQTKDNPMK (681 aa). 6 Cadherin domains span residues 36–135, 136–246, 247–353, 359–472, 473–576, and 573–688; these read NGNM…APRF, IQEP…APVF, VGTP…PPTF, PQNR…VPKF, DSLY…PPQF, and PPQF…SPMA. Residues Asn-58 and Asn-89 are each glycosylated (N-linked (GlcNAc...) asparagine). N-linked (GlcNAc...) asparagine glycosylation is present at Asn-296. A helical transmembrane segment spans residues 701 to 721; sequence AVGVLAGTMATVVAITVLIST. Over 722–859 the chain is Cytoplasmic; it reads ATFWRNKKSN…KKSVHNKAYF (138 aa). The tract at residues 770–838 is disordered; sequence KEKPPNENCN…PKTMGSPVQS (69 aa). The span at 775 to 791 shows a compositional bias: low complexity; the sequence is NENCNNNSPESSLLPRA.

Interacts with PROM1. Undergoes proteolytic cleavage; produces a soluble 95 kDa N-terminal fragment and a 25 kDa cell-associated C-terminal fragment.

Its subcellular location is the cell membrane. Functionally, potential calcium-dependent cell-adhesion protein. May be required for the structural integrity of the outer segment (OS) of photoreceptor cells. This is Cadherin-related family member 1 from Homo sapiens (Human).